The following is a 175-amino-acid chain: NADH-quinone oxidoreductase subunit I (175 aa).

2 4Fe-4S ferredoxin-type domains span residues 69–98 and 115–144; these read KRDEQGRERCTSCFCCMWICPADAIYIEAG and KKFEIDLLRCIFCGMCEEACPKGAIYLDGP. [4Fe-4S] cluster-binding residues include Cys78, Cys81, Cys84, Cys88, Cys124, Cys127, Cys130, and Cys134.

This sequence belongs to the complex I 23 kDa subunit family. As to quaternary structure, NDH-1 is composed of 14 different subunits. Subunits NuoA, H, J, K, L, M, N constitute the membrane sector of the complex. [4Fe-4S] cluster serves as cofactor.

It localises to the cell inner membrane. It catalyses the reaction a quinone + NADH + 5 H(+)(in) = a quinol + NAD(+) + 4 H(+)(out). NDH-1 shuttles electrons from NADH, via FMN and iron-sulfur (Fe-S) centers, to quinones in the respiratory chain. The immediate electron acceptor for the enzyme in this species is believed to be ubiquinone. Couples the redox reaction to proton translocation (for every two electrons transferred, four hydrogen ions are translocated across the cytoplasmic membrane), and thus conserves the redox energy in a proton gradient. In Leptospira borgpetersenii serovar Hardjo-bovis (strain JB197), this protein is NADH-quinone oxidoreductase subunit I.